The sequence spans 305 residues: UDP-N-acetylenolpyruvoylglucosamine reductase 2 (305 aa).

Residues 33–197 enclose the FAD-binding PCMH-type domain; that stretch reads VGGKADVFVA…LEARFELEEG (165 aa). The active site involves arginine 176. Serine 226 (proton donor) is an active-site residue. Residue glutamate 296 is part of the active site.

The protein belongs to the MurB family. Requires FAD as cofactor.

The protein resides in the cytoplasm. It catalyses the reaction UDP-N-acetyl-alpha-D-muramate + NADP(+) = UDP-N-acetyl-3-O-(1-carboxyvinyl)-alpha-D-glucosamine + NADPH + H(+). Its pathway is cell wall biogenesis; peptidoglycan biosynthesis. Cell wall formation. This is UDP-N-acetylenolpyruvoylglucosamine reductase 2 from Bacillus thuringiensis subsp. konkukian (strain 97-27).